We begin with the raw amino-acid sequence, 140 residues long: uncharacterized protein (140 aa).

18 to 25 provides a ligand contact to ATP; that stretch reads GTNGSGKS.

This is an uncharacterized protein from Haemophilus influenzae (strain ATCC 51907 / DSM 11121 / KW20 / Rd).